Reading from the N-terminus, the 144-residue chain is Large ribosomal subunit protein uL14 (144 aa).

It belongs to the universal ribosomal protein uL14 family. As to quaternary structure, part of the 50S ribosomal subunit. Forms a cluster with proteins L3 and L24e, part of which may contact the 16S rRNA in 2 intersubunit bridges.

Functionally, binds to 23S rRNA. Forms part of two intersubunit bridges in the 70S ribosome. This chain is Large ribosomal subunit protein uL14, found in Caldivirga maquilingensis (strain ATCC 700844 / DSM 13496 / JCM 10307 / IC-167).